The sequence spans 446 residues: Calcium-binding and coiled-coil domain-containing protein 2 (446 aa).

A CLIR motif is present at residues 133-136 (ILVV). A coiled-coil region spans residues 137-349 (TTQGEVEEIE…RENSRLLSYM (213 aa)). Positions 203–206 (DYWE) match the LIR-like motif. Positions 371-381 (NPGLVYGNPYS) are interaction with LGALS8. The tract at residues 395–446 (KKCPICKADDICDHILEQQQMQPLCLNCPICDKIFPATEKQIFEDHVFCHSL) is interaction with MYO6. The UBZ1-type zinc-finger motif lies at 419–444 (CLNCPICDKIFPATEKQIFEDHVFCH). Residues C422, C425, H440, and H444 each contribute to the Zn(2+) site. S445 is subject to Phosphoserine.

It belongs to the CALCOCO family. In terms of assembly, dimer. Part of a complex consisting of CALCOCO2, TAX1BP1 and MYO6. Interacts with MYO6. Interacts with GEMIN4. Interacts with ATG8 family members MAP1LC3A, MAP1LC3B, GABARAP, GABARAPL1 and GABARAPL2. Interacts with ATG8 family member MAP1LC3C. Interacts with LGALS8. Interacts with TOM1; the interaction is indirect and is mediated by MYO6, which acts as a bridge between TOM1 and CALCOCO2. Interacts with AZI2.

It localises to the cytoplasm. The protein localises to the perinuclear region. The protein resides in the cytoskeleton. Its subcellular location is the cytoplasmic vesicle. It is found in the autophagosome membrane. In terms of biological role, xenophagy-specific receptor required for autophagy-mediated intracellular bacteria degradation. Acts as an effector protein of galectin-sensed membrane damage that restricts the proliferation of infecting pathogens upon entry into the cytosol by targeting LGALS8-associated bacteria for autophagy. Initially orchestrates bacteria targeting to autophagosomes and subsequently ensures pathogen degradation by regulating pathogen-containing autophagosome maturation. Bacteria targeting to autophagosomes relies on its interaction with MAP1LC3A, MAP1LC3B and/or GABARAPL2, whereas regulation of pathogen-containing autophagosome maturation requires the interaction with MAP3LC3C. May play a role in ruffle formation and actin cytoskeleton organization and seems to negatively regulate constitutive secretion. This is Calcium-binding and coiled-coil domain-containing protein 2 from Pongo abelii (Sumatran orangutan).